The following is a 1083-amino-acid chain: Protein HOS4 (1083 aa).

2 disordered regions span residues 1-233 (MNET…RKLV) and 267-328 (SSLF…YRDS). 2 positions are modified to phosphoserine: S14 and S16. Over residues 24-62 (TRREELEKISKQETSEEEDTAGKHEQRETLSEEVSDKFP) the composition is skewed to basic and acidic residues. Position 37 is a phosphothreonine (T37). The residue at position 67 (S67) is a Phosphoserine. Residues 67–85 (SFRSQTTSVHQATQNNLNA) are compositionally biased toward polar residues. Basic and acidic residues predominate over residues 86 to 118 (KESEDLAHKNDASSHEGEVNGDSRPDDVPETNE). Residues 135-149 (PNVRNVDIQNHQPFS) show a composition bias toward polar residues. Over residues 151–166 (DQLRAMLKEPKRKTVD) the composition is skewed to basic and acidic residues. Over residues 167-185 (DFIEEEGLGAVEEEDLSDE) the composition is skewed to acidic residues. A compositionally biased stretch (basic and acidic residues) spans 186–207 (VLEKNTTEPENVEKDIEYSDSD). Residues 277-293 (VKETNNNLSNMNSSPAQ) are compositionally biased toward polar residues. S290 is modified (phosphoserine). Over residues 300 to 310 (VSRSNDSNKSS) the composition is skewed to low complexity. Basic residues predominate over residues 314 to 323 (VSKRPKQKKG). 3 ANK repeats span residues 329–359 (GGRT…DIND), 363–392 (AGNT…DVNI), and 398–427 (FGDT…DPTI). Residues 472-516 (AGIHNDKSKNGNNAHTIDQPPFDNTTKAKNEKAADSPSMASNIDE) form a disordered region. A compositionally biased stretch (polar residues) spans 481-496 (NGNNAHTIDQPPFDNT). Phosphoserine is present on S507. 2 ANK repeats span residues 532-561 (AGKE…KIDL) and 593-622 (NKTS…DPTK). Disordered stretches follow at residues 661 to 742 (HSED…DDNE) and 762 to 790 (DEEK…ISKI). The segment covering 665–675 (NNDDDDDDDNN) has biased composition (acidic residues). Phosphoserine is present on S698. A Phosphothreonine modification is found at T700. Positions 721 to 740 (NNDRDVKESTTSDSRKRLDD) are enriched in basic and acidic residues. Residue S778 is modified to Phosphoserine.

Identified in the Set3C complex with HOS2, HST1, SNT1, SIF2, CPR1 and SET3.

Unknown. Component of the Set3C complex, which is required to repress early/middle sporulation genes during meiosis. The protein is Protein HOS4 (HOS4) of Saccharomyces cerevisiae (strain ATCC 204508 / S288c) (Baker's yeast).